The chain runs to 874 residues: Alanine--tRNA ligase (874 aa).

Positions 562, 566, 664, and 668 each coordinate Zn(2+).

This sequence belongs to the class-II aminoacyl-tRNA synthetase family. Zn(2+) is required as a cofactor.

The protein resides in the cytoplasm. It catalyses the reaction tRNA(Ala) + L-alanine + ATP = L-alanyl-tRNA(Ala) + AMP + diphosphate. Functionally, catalyzes the attachment of alanine to tRNA(Ala) in a two-step reaction: alanine is first activated by ATP to form Ala-AMP and then transferred to the acceptor end of tRNA(Ala). Also edits incorrectly charged Ser-tRNA(Ala) and Gly-tRNA(Ala) via its editing domain. This chain is Alanine--tRNA ligase, found in Shewanella woodyi (strain ATCC 51908 / MS32).